The chain runs to 239 residues: Elongation factor Ts (239 aa).

An involved in Mg(2+) ion dislocation from EF-Tu region spans residues 82 to 85 (TDFV). The interval 213 to 239 (AAQTKPKAEEKPAAKKATSKKKKGKKK) is disordered. Residues 229–239 (ATSKKKKGKKK) show a composition bias toward basic residues.

This sequence belongs to the EF-Ts family.

The protein resides in the cytoplasm. Associates with the EF-Tu.GDP complex and induces the exchange of GDP to GTP. It remains bound to the aminoacyl-tRNA.EF-Tu.GTP complex up to the GTP hydrolysis stage on the ribosome. The sequence is that of Elongation factor Ts from Acaryochloris marina (strain MBIC 11017).